Here is a 282-residue protein sequence, read N- to C-terminus: Shikimate dehydrogenase (NADP(+)) (282 aa).

Shikimate is bound by residues serine 24 to serine 26 and threonine 71. Lysine 75 acts as the Proton acceptor in catalysis. Position 87 (aspartate 87) interacts with NADP(+). Shikimate is bound by residues asparagine 96 and aspartate 112. Residues glycine 138–alanine 142, asparagine 162–arginine 167, and leucine 227 contribute to the NADP(+) site. Shikimate is bound at residue tyrosine 229. Glycine 250 provides a ligand contact to NADP(+).

Belongs to the shikimate dehydrogenase family. As to quaternary structure, homodimer.

The catalysed reaction is shikimate + NADP(+) = 3-dehydroshikimate + NADPH + H(+). It participates in metabolic intermediate biosynthesis; chorismate biosynthesis; chorismate from D-erythrose 4-phosphate and phosphoenolpyruvate: step 4/7. Functionally, involved in the biosynthesis of the chorismate, which leads to the biosynthesis of aromatic amino acids. Catalyzes the reversible NADPH linked reduction of 3-dehydroshikimate (DHSA) to yield shikimate (SA). In Paracoccus denitrificans (strain Pd 1222), this protein is Shikimate dehydrogenase (NADP(+)).